The primary structure comprises 426 residues: Serine--tRNA ligase (426 aa).

An L-serine-binding site is contributed by 233 to 235 (TAE). 264–266 (RSE) is an ATP binding site. Position 287 (Glu287) interacts with L-serine. 351–354 (EISS) contacts ATP. Ser387 provides a ligand contact to L-serine.

It belongs to the class-II aminoacyl-tRNA synthetase family. Type-1 seryl-tRNA synthetase subfamily. As to quaternary structure, homodimer. The tRNA molecule binds across the dimer.

It localises to the cytoplasm. The enzyme catalyses tRNA(Ser) + L-serine + ATP = L-seryl-tRNA(Ser) + AMP + diphosphate + H(+). It carries out the reaction tRNA(Sec) + L-serine + ATP = L-seryl-tRNA(Sec) + AMP + diphosphate + H(+). It functions in the pathway aminoacyl-tRNA biosynthesis; selenocysteinyl-tRNA(Sec) biosynthesis; L-seryl-tRNA(Sec) from L-serine and tRNA(Sec): step 1/1. Catalyzes the attachment of serine to tRNA(Ser). Is also able to aminoacylate tRNA(Sec) with serine, to form the misacylated tRNA L-seryl-tRNA(Sec), which will be further converted into selenocysteinyl-tRNA(Sec). The chain is Serine--tRNA ligase from Clostridium botulinum (strain Loch Maree / Type A3).